A 305-amino-acid chain; its full sequence is Acyl transferase (305 aa).

Residues Ser-116, Asp-213, and His-243 each act as charge relay system in the active site.

It belongs to the LuxD family.

It functions in the pathway lipid metabolism; fatty acid reduction for biolumincescence. In terms of biological role, acyl transferase is part of the fatty acid reductase system required for aldehyde biosynthesis; it produces fatty acids for the luminescent reaction. The sequence is that of Acyl transferase from Photobacterium leiognathi.